The chain runs to 184 residues: Inosine triphosphate pyrophosphatase (184 aa).

10–15 is an ITP binding site; the sequence is TGNANK. Glutamate 38 contributes to the Mg(2+) binding site. ITP is bound by residues lysine 50, 66–67, lysine 83, 142–145, lysine 163, and 168–169; these read DT, FGWD, and HR.

The protein belongs to the HAM1 NTPase family. Homodimer. It depends on Mg(2+) as a cofactor. The cofactor is Mn(2+).

The protein localises to the cytoplasm. The protein resides in the nucleus. The catalysed reaction is ITP + H2O = IMP + diphosphate + H(+). It carries out the reaction dITP + H2O = dIMP + diphosphate + H(+). It catalyses the reaction XTP + H2O = XMP + diphosphate + H(+). Pyrophosphatase that hydrolyzes non-canonical purine nucleotides such as inosine triphosphate (ITP), deoxyinosine triphosphate (dITP) or xanthosine 5'-triphosphate (XTP) to their respective monophosphate derivatives. The enzyme does not distinguish between the deoxy- and ribose forms. Probably excludes non-canonical purines from RNA and DNA precursor pools, thus preventing their incorporation into RNA and DNA and avoiding chromosomal lesions. In Fusarium vanettenii (strain ATCC MYA-4622 / CBS 123669 / FGSC 9596 / NRRL 45880 / 77-13-4) (Fusarium solani subsp. pisi), this protein is Inosine triphosphate pyrophosphatase.